Reading from the N-terminus, the 262-residue chain is Cytochrome c oxidase subunit 3 (262 aa).

Helical transmembrane passes span 39–59, 83–103, 120–140, 163–183, 201–221, and 240–260; these read YDISLFLLGNIITILTVYQWW, GMILFILSEVLFFVSFFWAFF, MGIISFNPFQIPLLNTAILLA, GLFFTVLLGIYFTILQAYEYI, ATGFHGVHVLIGTTFLLVCLL, and AWYWHFVDVVWLFLYITIYWW.

This sequence belongs to the cytochrome c oxidase subunit 3 family. Component of the cytochrome c oxidase (complex IV, CIV), a multisubunit enzyme composed of a catalytic core of 3 subunits and several supernumerary subunits. The complex exists as a monomer or a dimer and forms supercomplexes (SCs) in the inner mitochondrial membrane with ubiquinol-cytochrome c oxidoreductase (cytochrome b-c1 complex, complex III, CIII).

The protein resides in the mitochondrion inner membrane. The enzyme catalyses 4 Fe(II)-[cytochrome c] + O2 + 8 H(+)(in) = 4 Fe(III)-[cytochrome c] + 2 H2O + 4 H(+)(out). In terms of biological role, component of the cytochrome c oxidase, the last enzyme in the mitochondrial electron transport chain which drives oxidative phosphorylation. The respiratory chain contains 3 multisubunit complexes succinate dehydrogenase (complex II, CII), ubiquinol-cytochrome c oxidoreductase (cytochrome b-c1 complex, complex III, CIII) and cytochrome c oxidase (complex IV, CIV), that cooperate to transfer electrons derived from NADH and succinate to molecular oxygen, creating an electrochemical gradient over the inner membrane that drives transmembrane transport and the ATP synthase. Cytochrome c oxidase is the component of the respiratory chain that catalyzes the reduction of oxygen to water. Electrons originating from reduced cytochrome c in the intermembrane space (IMS) are transferred via the dinuclear copper A center (CU(A)) of subunit 2 and heme A of subunit 1 to the active site in subunit 1, a binuclear center (BNC) formed by heme A3 and copper B (CU(B)). The BNC reduces molecular oxygen to 2 water molecules using 4 electrons from cytochrome c in the IMS and 4 protons from the mitochondrial matrix. The polypeptide is Cytochrome c oxidase subunit 3 (mt:CoIII) (Drosophila yakuba (Fruit fly)).